Here is a 205-residue protein sequence, read N- to C-terminus: ATP phosphoribosyltransferase (205 aa).

Belongs to the ATP phosphoribosyltransferase family. Short subfamily. As to quaternary structure, heteromultimer composed of HisG and HisZ subunits.

It localises to the cytoplasm. It catalyses the reaction 1-(5-phospho-beta-D-ribosyl)-ATP + diphosphate = 5-phospho-alpha-D-ribose 1-diphosphate + ATP. The protein operates within amino-acid biosynthesis; L-histidine biosynthesis; L-histidine from 5-phospho-alpha-D-ribose 1-diphosphate: step 1/9. Functionally, catalyzes the condensation of ATP and 5-phosphoribose 1-diphosphate to form N'-(5'-phosphoribosyl)-ATP (PR-ATP). Has a crucial role in the pathway because the rate of histidine biosynthesis seems to be controlled primarily by regulation of HisG enzymatic activity. This Nitratiruptor sp. (strain SB155-2) protein is ATP phosphoribosyltransferase.